We begin with the raw amino-acid sequence, 312 residues long: Zinc-finger homeodomain protein 4 (312 aa).

Residues 20 to 74 form a disordered region; sequence GGGGSHGHMIHHHDHHAANSAPPTHNNNNTTQPPPMPLHGNGHGNNYDHHHHQDP. The span at 37 to 50 shows a compositional bias: low complexity; the sequence is ANSAPPTHNNNNTT. The ZF-HD dimerization-type; degenerate zinc-finger motif lies at 90–139; that stretch reads YKECLKNHAAAMGGNATDGCGEFMPSGEDGSIEALTCSACNCHRNFHRKE. The segment at residues 218-281 is a DNA-binding region (homeobox); the sequence is KKRFRTKFTP…NNKIHFSKKN (64 aa).

Homo- and heterodimer with other ZFHD proteins. Interacts with ZHD1, ZHD2, ZHD5, ZHD7, ZHD8, ZHD10 and ZHD11. In terms of tissue distribution, mostly expressed in flowers and inflorescence.

It localises to the nucleus. In terms of biological role, putative transcription factor. Probably involved in the regulation of floral induction. This is Zinc-finger homeodomain protein 4 (ZHD4) from Arabidopsis thaliana (Mouse-ear cress).